The following is an 874-amino-acid chain: MSTFFQKQQQVAALDPRLGGLMASAGLYNLKALIKAIRSCKTLADERSLIQKESASIRTAFKDEDPFARHNNIAKLLYIHMLGYPAHFGQIECLKLVATPRFTDKRLGYLGIMLLLDENTEVLTLVTNGLKNDMEHSNMYVCGLALCTFANIASEEMSRDLCNEIEKLMGSSNTYIRRKAAICAMRIVRKVPDLIDHFVDRTQQLLSDKNHGVLLCAVTLAIEICRQDDEALTVYRRAVPLLVQHLKSLVTTGYSPEHDVSGITDPFLQVKILRLLRILGKENAQASETMNDILAQVATNTEASKNVGNSILYETVLTILEIDADNGLRVMAINILGKFLSNRDNNIRYVALNTLSKVVSMDTNAVQRHRNIILDCLRDGDISIRRRALELSYALINESNVRVLTRELLSFLEVADNEFKLGMTTQICLAAEKFAPNKRWHIDTVLRVLKLAGNYVREEILSAFIRLVCHTPELQAYTVQKLFSGLHQDFSQESLTLAAVWVIGEFGDVLIQGGNFEDEELVREVQPKDVVDLLSSVLDSPYVNGLIRQFVLTSLAKLHTRLSDASQQSRIEQIIASFETSVEVEIQQRSVEFATLLKRSDIRQGVLESMPPPEIKQTVLGTVSEAKPVGSTRSDKDALLDLMGDEMPVTSGGGTGADNAPSGATQQSTHDLLADIFGGGDMGGMPSAAPAASASAAQKPKSSVNDILGLFGDGASAPAAAAQQAPTPAPAATSSYGGLDLLGGLGASSSASTPAATPASTVAKSHTVYTKHGLTITLTPTTNPARPEIVHITARFTSATSAISNINFQAAVPKTHKLQMQAISNSTVHPDSTETQPLRVMVPPGAAVRLRLRIAFQVDGHSVQDQTDWAQPSA.

A GAE domain is found at 761-873 (TVAKSHTVYT…QDQTDWAQPS (113 aa)).

The protein belongs to the adaptor complexes large subunit family. As to quaternary structure, adaptor protein complex 1 (AP-1) is a heterotetramer composed of two large adaptins (gamma-type subunit APL4 and beta-type subunit APL2), a medium adaptin (mu-type subunit APM1) and a small adaptin (sigma-type subunit APS1). AP-1 interacts with clathrin.

The protein localises to the cytoplasmic vesicle. The protein resides in the clathrin-coated vesicle membrane. It is found in the golgi apparatus. In terms of biological role, adaptins are components of the adaptor complexes which link clathrin to receptors in coated vesicles. Clathrin-associated protein complexes are believed to interact with the cytoplasmic tails of membrane proteins, leading to their selection and concentration. The AP-1 complex interacts directly with clathrin. Required for apical growth extension. This is AP-1 complex subunit gamma-1 (APL4) from Mycosarcoma maydis (Corn smut fungus).